A 141-amino-acid polypeptide reads, in one-letter code: Hydroperoxide reductase (141 aa).

It belongs to the OsmC/Ohr family. In terms of assembly, homodimer.

It is found in the cytoplasm. Reduces organic and inorganic peroxide substrates. Protects the cell against oxidative stress. This chain is Hydroperoxide reductase, found in Mycoplasma pneumoniae (strain ATCC 29342 / M129 / Subtype 1) (Mycoplasmoides pneumoniae).